Consider the following 311-residue polypeptide: Probable cell division protein WhiA (311 aa).

Positions 274 to 308 form a DNA-binding region, H-T-H motif; the sequence is SLKELGEMIPSGAISKSGINHRIRKINEFAEKLRE.

It belongs to the WhiA family.

Involved in cell division and chromosome segregation. This Enterococcus faecalis (strain ATCC 700802 / V583) protein is Probable cell division protein WhiA.